Here is an 853-residue protein sequence, read N- to C-terminus: Deubiquitinase otu (853 aa).

The segment at 1–20 (MDMQVQRPITSGSRQAPDPY) is disordered. One can recognise an OTU domain in the interval 29–150 (LYRKHTARDA…ENHFDSVYDV (122 aa)). Asp-37 is a catalytic residue. Catalysis depends on Ser-40, which acts as the Nucleophile. The active site involves His-143. The Tudor domain occupies 336-396 (NFKVGAKCKV…HPLPPDEYRP (61 aa)). Residues 396-853 (PWSLPFRYHR…AAVYAATRHH (458 aa)) form an LC domain region. The segment covering 460–470 (QDDEQRDHNDP) has biased composition (basic and acidic residues). Disordered stretches follow at residues 460-531 (QDDE…YVPM), 681-704 (AVESTPPPSPEVANATEQSPLEKS), 732-794 (GPAA…AAQG), and 817-853 (NMDPSAQPQQQQPATLQPAPLSVQSQPAAVYAATRHH). A compositionally biased stretch (low complexity) spans 499-517 (SRVQPQNSSSSQNQEVSGS). Over residues 747–758 (NGSQFSFYTTPS) the composition is skewed to polar residues. Residues 769–778 (LLQPPPPPPI) are compositionally biased toward pro residues. Low complexity-rich tracts occupy residues 783–794 (AGPPQLGGAAQG) and 820–838 (PSAQPQQQQPATLQPAPLS).

Self aggregates, forming amyloid-like fibrillar helical structures; protein aggregation is mediated by the C-terminal LC domain, is enhanced by RNA binding and is essential for deubiquitinase activity. Interacts (via OTU domain) with bam (via C-terminus); the interaction enhances otu aggregation and deubiquitinase activity. Together with bam interacts with CycA/cyclin-A; the interaction stabilizes CycA by promoting its deubiquitination. Together with bam interacts with Traf6. Interacts with Hrb27C; the interaction is RNA-independent. Associates (via N-terminus) with mRNP complexes; the interaction is weak. Expressed at high levels in the ovary, at low levels in the brain and fat body, and at moderate levels in the gut.

The protein localises to the cytoplasm. It localises to the cell cortex. It is found in the perinuclear region. Its activity is regulated as follows. Activated by protein aggregation, which is mediated by the LC domain and enhanced by RNA binding. In terms of biological role, catalytic component of a deubiquitinase complex consisting of bam and otu. The complex deubiquitinates K63-linked polyubiquitinated proteins; this antagonizes the ubiquitination activity of Traf6 and regulates the IMD immune signaling pathway. Otu-bam deubiquitinase activity is regulated by Traf6 dependent immune signaling regulation of bam expression levels; this forms a feedback loop that regulates the IMD immune signaling pathway and balances gut immune activity during aging. The complex deubiquitinates and stabilizes CycA/cyclin-A to regulate CycA-dependent differentiation. Involved in grk mRNA localization to the dorsal anterior region of the oocyte required for dorsal-ventral axis determination; may function as a ribonuclear protein complex together with sqd and Hrb27C. May regulate actin cytoskeleton organization in differentiating cystocytes during fusome maturation; required for efficient nurse cell cytoplasmic dumping during oogenesis. Essential for female fertility; involved in germ cell proliferation and germ cell differentiation. Its function is as follows. Involved in the early stages of germ cell proliferation and differentiation during oogenesis. Required for polytene chromosome dispersal in nurse cells during oogenesis. Involved in the later stages of germ cell proliferation and differentiation during oogenesis. The sequence is that of Deubiquitinase otu from Drosophila melanogaster (Fruit fly).